A 354-amino-acid chain; its full sequence is Dihydroflavonol 4-reductase (354 aa).

Positions 44 and 163 each coordinate NADP(+).

The protein belongs to the NAD(P)-dependent epimerase/dehydratase family. Dihydroflavonol-4-reductase subfamily.

It carries out the reaction a (2R,3S,4S)-leucoanthocyanidin + NADP(+) = a (2R,3R)-dihydroflavonol + NADPH + H(+). It catalyses the reaction (2S)-flavan-4-ol + NADP(+) = (2S)-flavanone + NADPH + H(+). The protein operates within pigment biosynthesis; anthocyanin biosynthesis. In terms of biological role, bifunctional enzyme involved in flavonoid metabolism. The sequence is that of Dihydroflavonol 4-reductase (ANT18) from Hordeum vulgare (Barley).